Here is a 972-residue protein sequence, read N- to C-terminus: UPF0746 protein DDB_G0280785 (972 aa).

Basic and acidic residues predominate over residues 1–19 (MISNKRKEIENINRHHEKD). Positions 1–30 (MISNKRKEIENINRHHEKDNDDDDSDGIDN) are disordered. Positions 44–78 (SGSTNYRELQIIAKSLGLASNGKKQLVYNRIEGYF) constitute an SAP domain.

It belongs to the UPF0746 family.

The polypeptide is UPF0746 protein DDB_G0280785 (Dictyostelium discoideum (Social amoeba)).